Here is a 958-residue protein sequence, read N- to C-terminus: Probable protein phosphatase DDB_G0282105 (958 aa).

Helical transmembrane passes span 2-22 (VLMM…SLMV) and 26-46 (FLEF…ILFF). A coiled-coil region spans residues 142 to 330 (SASQQSELTN…KDKERERSSS (189 aa)). Over residues 312 to 328 (QEKEKQKLEKDKERERS) the composition is skewed to basic and acidic residues. 5 disordered regions span residues 312-361 (QEKE…PIPI), 380-421 (SVNG…PKFK), 445-475 (HLGS…TTPI), 491-525 (ITSP…ILSP), and 619-659 (NNNN…NDNK). 5 stretches are compositionally biased toward low complexity: residues 329–361 (SSFS…PIPI), 390–401 (SSVSPPSSSYLR), 452–475 (TPAN…TTPI), 491–515 (ITSP…SSSS), and 619–655 (NNNN…NNNK). The stretch at 613-666 (NFLKTNNNNNKNNIEESNNNNNNNNNNNNNNNNNNNNNNNNNKNDNKEVNSKLE) forms a coiled coil. The region spanning 675-958 (KIGLRRAKKK…DNVTVIIVKL (284 aa)) is the PPM-type phosphatase domain. Residues aspartate 722, glycine 723, aspartate 905, and aspartate 949 each contribute to the Mn(2+) site.

It in the C-terminal section; belongs to the PP2C family. It depends on Mg(2+) as a cofactor. Requires Mn(2+) as cofactor.

It localises to the membrane. The catalysed reaction is O-phospho-L-seryl-[protein] + H2O = L-seryl-[protein] + phosphate. It carries out the reaction O-phospho-L-threonyl-[protein] + H2O = L-threonyl-[protein] + phosphate. In Dictyostelium discoideum (Social amoeba), this protein is Probable protein phosphatase DDB_G0282105.